The primary structure comprises 1295 residues: Serine protease sat autotransporter (1295 aa).

The first 49 residues, 1–49 (MNKIYSLKYSAATGGLIAVSELAKRVSGKTNRKLVATMLSLAVAGTVNA), serve as a signal peptide directing secretion. The Peptidase S6 domain occupies 51–300 (NIDISNVWAR…TKYNDKLVSE (250 aa)). Catalysis depends on charge relay system residues His-121, Asp-149, and Ser-256. In terms of domain architecture, Autotransporter spans 1029–1295 (DINGESGAWA…AINANFRYSF (267 aa)).

Cleaved to release the mature protein from the outer membrane.

It is found in the periplasm. Its subcellular location is the secreted. It localises to the cell surface. The protein resides in the cell outer membrane. Its activity is regulated as follows. Inhibited by phenylmethylsulfonyl fluoride and Pefabloc. Shows serine protease activity and displays cytophatic activity, including elongation, rounding, and detachment of a proportion of the cells from monolayer in culture. Triggers vacuolation within the cytoplasm of the human bladder and kidney cells. This is Serine protease sat autotransporter (sat) from Escherichia coli O6:H1 (strain CFT073 / ATCC 700928 / UPEC).